Consider the following 71-residue polypeptide: DNA-directed RNA polymerase subunit omega (71 aa).

This sequence belongs to the RNA polymerase subunit omega family. The RNAP catalytic core consists of 2 alpha, 1 beta, 1 beta' and 1 omega subunit. When a sigma factor is associated with the core the holoenzyme is formed, which can initiate transcription.

The catalysed reaction is RNA(n) + a ribonucleoside 5'-triphosphate = RNA(n+1) + diphosphate. Its function is as follows. Promotes RNA polymerase assembly. Latches the N- and C-terminal regions of the beta' subunit thereby facilitating its interaction with the beta and alpha subunits. The protein is DNA-directed RNA polymerase subunit omega of Azoarcus sp. (strain BH72).